A 291-amino-acid polypeptide reads, in one-letter code: Protease HtpX homolog (291 aa).

2 helical membrane passes run 4–24 (IVLFLATNLAIVLVLSLTMRL) and 39–59 (TSLLIFAAVMGFGGSLISLAI). H145 serves as a coordination point for Zn(2+). E146 is a catalytic residue. Position 149 (H149) interacts with Zn(2+). A run of 2 helical transmembrane segments spans residues 156–176 (VTLALIQGVVNTFVMFLSRII) and 195–215 (FFVTMIVAELVLGILASIIVM). E222 serves as a coordination point for Zn(2+).

The protein belongs to the peptidase M48B family. Zn(2+) serves as cofactor.

Its subcellular location is the cell inner membrane. This chain is Protease HtpX homolog, found in Thiobacillus denitrificans (strain ATCC 25259 / T1).